The sequence spans 57 residues: UPF0391 membrane protein XOO1885 (57 aa).

2 helical membrane-spanning segments follow: residues 4 to 24 (WAII…GGMA) and 33 to 53 (FLFW…MTIA).

Belongs to the UPF0391 family.

The protein localises to the cell membrane. This Xanthomonas oryzae pv. oryzae (strain KACC10331 / KXO85) protein is UPF0391 membrane protein XOO1885.